Consider the following 256-residue polypeptide: Endonuclease NucS (256 aa).

Positions 62–97 are disordered; sequence AAKSAQHSRESVAGGAVDGDSATHSPESVAAGEPEK.

The protein belongs to the NucS endonuclease family.

The protein resides in the cytoplasm. In terms of biological role, cleaves both 3' and 5' ssDNA extremities of branched DNA structures. This is Endonuclease NucS from Bifidobacterium longum (strain NCC 2705).